Here is a 334-residue protein sequence, read N- to C-terminus: G-protein coupled receptor 12 (334 aa).

Over Met-1–Asp-48 the chain is Extracellular. N-linked (GlcNAc...) asparagine glycans are attached at residues Asn-8 and Asn-24. A helical transmembrane segment spans residues Ile-49–Ile-69. Over Phe-70–Pro-78 the chain is Cytoplasmic. A helical transmembrane segment spans residues Met-79–Ile-99. Residues Asn-100 to Lys-113 lie on the Extracellular side of the membrane. A helical transmembrane segment spans residues Leu-114–Ile-134. Topologically, residues Thr-135–Tyr-158 are cytoplasmic. Residues Val-159 to Trp-179 form a helical membrane-spanning segment. Over Asn-180–Ala-199 the chain is Extracellular. A helical transmembrane segment spans residues Ala-200–Ile-220. Residues Cys-221–Thr-252 are Cytoplasmic-facing. A helical transmembrane segment spans residues Leu-253–Ile-273. Residues Ala-274–Tyr-282 lie on the Extracellular side of the membrane. A helical transmembrane segment spans residues Thr-283–Phe-303. Topologically, residues Arg-304 to Val-334 are cytoplasmic. Cys-317 is lipidated: S-palmitoyl cysteine. Phosphoserine is present on residues Ser-330 and Ser-332.

It belongs to the G-protein coupled receptor 1 family. As to expression, expressed predominantly in the forebrain and a lesser extent in the hindbrain. Lower expression in the liver.

The protein resides in the cell membrane. Its function is as follows. Receptor with constitutive G(s) signaling activity that stimulates cyclic AMP production. Promotes neurite outgrowth and blocks myelin inhibition in neurons. This Mus musculus (Mouse) protein is G-protein coupled receptor 12 (Gpr12).